Reading from the N-terminus, the 315-residue chain is Ribosomal RNA small subunit methyltransferase H (315 aa).

S-adenosyl-L-methionine is bound by residues 35–37, Asp-55, Phe-79, Asp-101, and Gln-108; that span reads GGH.

It belongs to the methyltransferase superfamily. RsmH family.

The protein resides in the cytoplasm. It carries out the reaction cytidine(1402) in 16S rRNA + S-adenosyl-L-methionine = N(4)-methylcytidine(1402) in 16S rRNA + S-adenosyl-L-homocysteine + H(+). Functionally, specifically methylates the N4 position of cytidine in position 1402 (C1402) of 16S rRNA. In Sodalis glossinidius (strain morsitans), this protein is Ribosomal RNA small subunit methyltransferase H.